Reading from the N-terminus, the 546-residue chain is Protein RDR1 (546 aa).

The zn(2)-C6 fungal-type DNA-binding region spans 20-46 (CVPCRERKRKCNGKSPCEMCVAYGYVC).

It is found in the nucleus. Functionally, transcriptional repressor of multidrug resistance genes, such as PDR5. Required for growth on non-fermentable carbon sources like lactate or glycerol. The polypeptide is Protein RDR1 (RDR1) (Saccharomyces cerevisiae (strain ATCC 204508 / S288c) (Baker's yeast)).